The sequence spans 226 residues: Probable C4-dicarboxylate response regulator DctR (226 aa).

Residues 7 to 123 form the Response regulatory domain; that stretch reads KVLLIEDDPM…RMRQALEKYK (117 aa). Aspartate 58 carries the post-translational modification 4-aspartylphosphate. The H-T-H motif DNA-binding region spans 179 to 198; that stretch reads AEEVAKALGIARVTARRYLD.

Post-translationally, phosphorylated by DctS.

The protein resides in the cytoplasm. Functionally, member of the two-component regulatory system DctS/DctR. Essential for expression of dctP. This chain is Probable C4-dicarboxylate response regulator DctR (dctR), found in Bacillus subtilis (strain 168).